Here is a 337-residue protein sequence, read N- to C-terminus: Glyceraldehyde-3-phosphate dehydrogenase (337 aa).

Residues 17–18, D39, K83, and S125 contribute to the NAD(+) site; that span reads RI. D-glyceraldehyde 3-phosphate-binding positions include 156–158, T187, R202, 215–216, and R238; these read SCT and TG. The Nucleophile role is filled by C157. N319 is an NAD(+) binding site.

It belongs to the glyceraldehyde-3-phosphate dehydrogenase family. Homotetramer.

It is found in the cytoplasm. It carries out the reaction D-glyceraldehyde 3-phosphate + phosphate + NAD(+) = (2R)-3-phospho-glyceroyl phosphate + NADH + H(+). Its pathway is carbohydrate degradation; glycolysis; pyruvate from D-glyceraldehyde 3-phosphate: step 1/5. Its function is as follows. Catalyzes the oxidative phosphorylation of glyceraldehyde 3-phosphate (G3P) to 1,3-bisphosphoglycerate (BPG) using the cofactor NAD. The first reaction step involves the formation of a hemiacetal intermediate between G3P and a cysteine residue, and this hemiacetal intermediate is then oxidized to a thioester, with concomitant reduction of NAD to NADH. The reduced NADH is then exchanged with the second NAD, and the thioester is attacked by a nucleophilic inorganic phosphate to produce BPG. The polypeptide is Glyceraldehyde-3-phosphate dehydrogenase (gapA) (Mycoplasma genitalium (strain ATCC 33530 / DSM 19775 / NCTC 10195 / G37) (Mycoplasmoides genitalium)).